A 152-amino-acid polypeptide reads, in one-letter code: Small ribosomal subunit protein uS8m (152 aa).

The protein belongs to the universal ribosomal protein uS8 family.

The protein localises to the mitochondrion. This Dictyostelium discoideum (Social amoeba) protein is Small ribosomal subunit protein uS8m (mrps8).